Reading from the N-terminus, the 446-residue chain is Maltoporin (446 aa).

The N-terminal stretch at 1–25 (MMITLRKLPLAVAVAAGVMSAQAMA) is a signal peptide.

This sequence belongs to the porin LamB (TC 1.B.3) family. As to quaternary structure, homotrimer formed of three 18-stranded antiparallel beta-barrels, containing three independent channels.

The protein resides in the cell outer membrane. It catalyses the reaction beta-maltose(in) = beta-maltose(out). Involved in the transport of maltose and maltodextrins. The chain is Maltoporin from Escherichia coli (strain SE11).